The chain runs to 234 residues: Small ribosomal subunit protein uS2c (234 aa).

Belongs to the universal ribosomal protein uS2 family.

It is found in the plastid. The protein localises to the chloroplast. The polypeptide is Small ribosomal subunit protein uS2c (rps2) (Pinus koraiensis (Korean pine)).